Consider the following 200-residue polypeptide: Small ribosomal subunit protein uS4 (200 aa).

The disordered stretch occupies residues 20-41 (TGTGKELDKRPYAPGQHGPNQR). An S4 RNA-binding domain is found at 92 to 152 (SRLDNLVYRL…EKSKNLDVVK (61 aa)).

Belongs to the universal ribosomal protein uS4 family. Part of the 30S ribosomal subunit. Contacts protein S5. The interaction surface between S4 and S5 is involved in control of translational fidelity.

One of the primary rRNA binding proteins, it binds directly to 16S rRNA where it nucleates assembly of the body of the 30S subunit. Its function is as follows. With S5 and S12 plays an important role in translational accuracy. This is Small ribosomal subunit protein uS4 from Oceanobacillus iheyensis (strain DSM 14371 / CIP 107618 / JCM 11309 / KCTC 3954 / HTE831).